Consider the following 225-residue polypeptide: Immune-associated nucleotide-binding protein 1 (225 aa).

Residues 6–214 (CPVTNLLLLG…YTENMHRKIK (209 aa)) enclose the AIG1-type G domain. Residues 15–22 (GRSENGKS) form a G1 region. Residue 15 to 23 (GRSENGKSS) participates in GTP binding. Residues 42 to 46 (DMDQR) are G2. The G3 stretch occupies residues 64-67 (DTPG). Positions 134 to 137 (TGGD) are G4. The interval 173 to 175 (NNK) is G5. Position 174 (N174) interacts with GTP.

The protein belongs to the TRAFAC class TrmE-Era-EngA-EngB-Septin-like GTPase superfamily. AIG1/Toc34/Toc159-like paraseptin GTPase family. IAN subfamily. In terms of tissue distribution, mostly expressed in pollen.

This chain is Immune-associated nucleotide-binding protein 1, found in Arabidopsis thaliana (Mouse-ear cress).